The following is a 360-amino-acid chain: Cinnamyl alcohol dehydrogenase 2 (360 aa).

The Enoyl reductase (ER) domain occupies 23-351; that stretch reads GVLSPFNFSR…KADVKYRFVI (329 aa). Residue C50 coordinates Zn(2+). S52 lines the an alcohol pocket. Residue S52 participates in NADP(+) binding. Residues D53, H72, E73, C103, C106, C109, C117, and C166 each contribute to the Zn(2+) site. H72 lines the an alcohol pocket. The NADP(+) site is built by L192, G194, L195, S214, T215, S216, K219, K220, V277, A279, S301, and R348.

It belongs to the zinc-containing alcohol dehydrogenase family. Class-P subfamily. In terms of assembly, homodimer. Zn(2+) serves as cofactor. As to expression, mainly expressed in young roots and, to a lower extent, in stems and leaves.

It is found in the cytoplasm. It carries out the reaction (E)-cinnamyl alcohol + NADP(+) = (E)-cinnamaldehyde + NADPH + H(+). Alcohol dehydrogenase that catalyzes the conversion of (E)-cinnamyl alcohol to (E)-cinnamaldehyde. The chain is Cinnamyl alcohol dehydrogenase 2 from Rauvolfia serpentina (Serpentine wood).